The primary structure comprises 287 residues: Iodotyrosine deiodinase (287 aa).

The helical transmembrane segment at 15–34 (HWPSLFITLALIWIVKRLFF) threads the bilayer. FMN is bound by residues 96–100 (RRSIR), Ser-125, and 125–126 (SG). 3,5-diiodo-L-tyrosine-binding residues include Ala-127, Glu-154, Tyr-158, and Lys-179. Positions 127, 154, 158, and 179 each coordinate 3-iodo-L-tyrosine. FMN is bound by residues 235 to 237 (VTT) and Arg-277.

It belongs to the nitroreductase family. Homodimer. It depends on FMN as a cofactor. As to expression, expressed in spermatocytes.

It localises to the cell membrane. The catalysed reaction is 2 iodide + L-tyrosine + 2 NADP(+) = 3,5-diiodo-L-tyrosine + 2 NADPH + H(+). It carries out the reaction iodide + L-tyrosine + NADP(+) = 3-iodo-L-tyrosine + NADPH. The enzyme catalyses 3-iodo-L-tyrosine + iodide + NADP(+) = 3,5-diiodo-L-tyrosine + NADPH + H(+). It catalyses the reaction L-tyrosine + chloride + NADP(+) = 3-chloro-L-tyrosine + NADPH. The catalysed reaction is bromide + L-tyrosine + NADP(+) = 3-bromo-L-tyrosine + NADPH. Its function is as follows. Catalyzes the dehalogenation of halotyrosines such as 3-bromo-L-tyrosine, 3-chloro-L-tyrosine, 3-iodo-L-tyrosine and 3,5-diiodo-L-tyrosine. Activity towards 3-fluoro-L-tyrosine is weak. Important for male and female fertility. May be involved in maintaining the viability of sperm, both during development in the testes and storage in the female spermatheca. This Drosophila melanogaster (Fruit fly) protein is Iodotyrosine deiodinase.